The following is a 473-amino-acid chain: Nuclear distribution protein PAC1 (473 aa).

Positions 9 to 41 (QAEELHKSIIAYFLSAKLPKSAAALREEIADSV) constitute a LisH domain. A coiled-coil region spans residues 60-87 (TSVVRLQKKIMDLEARNSALQSELDSAT). Over residues 80–93 (QSELDSATPTSLSR) the composition is skewed to polar residues. The segment at 80 to 99 (QSELDSATPTSLSRRNQDPV) is disordered. WD repeat units lie at residues 113-154 (SHRN…RTIK), 156-196 (HTRA…KNIR), 200-247 (GHDH…CVRT), 250-289 (GHVE…TKST), 292-352 (GHEH…IKTL), 354-393 (GHDN…KCVR), 397-434 (DAHA…ALSG), and 435-472 (VNGI…RVFA).

Belongs to the WD repeat LIS1/nudF family. Self-associates. Interacts with NDL1 and dynein.

It localises to the cytoplasm. It is found in the cytoskeleton. The protein localises to the spindle pole. Its function is as follows. Positively regulates the activity of the minus-end directed microtubule motor protein dynein. May enhance dynein-mediated microtubule sliding by targeting dynein to the microtubule plus end. Required for nuclear migration during vegetative growth as well as development. Required for retrograde early endosome (EE) transport from the hyphal tip. Required for localization of dynein to the mitotic spindle poles. Recruits additional proteins to the dynein complex at SPBs. The polypeptide is Nuclear distribution protein PAC1 (Ajellomyces dermatitidis (strain ER-3 / ATCC MYA-2586) (Blastomyces dermatitidis)).